We begin with the raw amino-acid sequence, 186 residues long: Nuclear transcription factor Y subunit B-1 (186 aa).

The tract at residues 1–24 (MAGNKKRGGRNMDQVKKAAVRSDG) is disordered. The DNA-binding element occupies 34-40 (LPMANLV). Residues 61-72 (THDCAVEFVGFV) are subunit association domain (SAD). Residues 123–142 (GGNRRVAPPPPAAATPLTPG) are disordered.

It belongs to the NFYB/HAP3 subunit family. As to quaternary structure, heterotrimeric transcription factor composed of three components, NF-YA, NF-YB and NF-YC. NF-YB and NF-YC must interact and dimerize for NF-YA association and DNA binding. Interacts with MADS18. Forms a ternary complex with the MADS6-MADS18 heterodimer. In terms of tissue distribution, expressed in developing kernels.

The protein resides in the nucleus. Its function is as follows. Component of the NF-Y/HAP transcription factor complex. The NF-Y complex stimulates the transcription of various genes by recognizing and binding to a CCAAT motif in promoters. May act through association with MADS-box proteins. May regulate the expression of genes involved in flowering. This is Nuclear transcription factor Y subunit B-1 (NFYB1) from Oryza sativa subsp. japonica (Rice).